Consider the following 414-residue polypeptide: uncharacterized protein (414 aa).

Disordered regions lie at residues 136–168 (SSKS…TVPT), 297–333 (PQNF…ENAS), and 346–414 (ALNA…NGSK). Polar residues predominate over residues 350–359 (PSRSRPTHGS). Over residues 399 to 414 (SKSEKIYPEPRRNGSK) the composition is skewed to basic and acidic residues.

This is an uncharacterized protein from Homo sapiens (Human).